A 197-amino-acid polypeptide reads, in one-letter code: MSASRFIKCVTVGDGAVGKTCLLISYTSNTFPTDYVPTVFDNFSANVVVNGSTVNLGLWDTAGQEDYNRLRPLSYRGADVFILAFSLISKASYENVSKKWIPELKHYAPGVPIILVGTKLDLRDDKQFFVDHPGAVPITTAQGEELRKLINAPAYIECSSKSQQNVKAVFDAAIRVVLQPPKQKKKKSKAQKACSIL.

13–20 (GDGAVGKT) is a GTP binding site. Positions 35-43 (YVPTVFDNF) match the Effector region motif. GTP-binding positions include 60–64 (DTAGQ) and 118–121 (TKLD). Cys-194 is modified (cysteine methyl ester). Cys-194 carries the S-geranylgeranyl cysteine lipid modification. The propeptide at 195-197 (SIL) is removed in mature form.

The protein belongs to the small GTPase superfamily. Rho family. In terms of tissue distribution, expressed at the tip of pollen tubes.

The protein resides in the cytoplasm. The protein localises to the membrane. Its function is as follows. Inactive GDP-bound Rho GTPases reside in the cytosol, are found in a complex with Rho GDP-dissociation inhibitors (Rho GDIs), and are released from the GDI protein in order to translocate to membranes upon activation. May be involved in cell polarity control during the actin-dependent tip growth of pollen tubes. The sequence is that of Rac-like GTP-binding protein RHO1 (RHO1) from Pisum sativum (Garden pea).